The primary structure comprises 125 residues: MAVCIIDHDNIRGVIYFEPVHGKDKVLGSVIGLKSGTYSLIIHRYGDISRGCDSIDSPEIFIGNIFVNRYGVAYVYLDTDVNISTIIGKALSISKNDQRLACGVIGISFINEKIIHFLTINENGV.

Cys52 and Cys102 form a disulfide bridge.

This sequence belongs to the Cu-Zn superoxide dismutase family.

It is found in the host cytoplasm. Virion protein with no enzymatic activity. This chain is Cu-Zn superoxide dismutase-like protein, found in Mus musculus (Mouse).